A 245-amino-acid polypeptide reads, in one-letter code: Probable phosphatase YcdX (245 aa).

Residues H7, H9, H15, H40, E73, H101, H131, D192, and H194 each contribute to the Zn(2+) site.

This sequence belongs to the PHP family. In terms of assembly, homotrimer. The cofactor is Zn(2+).

This is Probable phosphatase YcdX from Escherichia fergusonii (strain ATCC 35469 / DSM 13698 / CCUG 18766 / IAM 14443 / JCM 21226 / LMG 7866 / NBRC 102419 / NCTC 12128 / CDC 0568-73).